The sequence spans 512 residues: Histidine ammonia-lyase (512 aa).

A cross-link (5-imidazolinone (Ala-Gly)) is located at residues 142–144 (ASG). The residue at position 143 (serine 143) is a 2,3-didehydroalanine (Ser).

This sequence belongs to the PAL/histidase family. Contains an active site 4-methylidene-imidazol-5-one (MIO), which is formed autocatalytically by cyclization and dehydration of residues Ala-Ser-Gly.

The protein resides in the cytoplasm. The enzyme catalyses L-histidine = trans-urocanate + NH4(+). Its pathway is amino-acid degradation; L-histidine degradation into L-glutamate; N-formimidoyl-L-glutamate from L-histidine: step 1/3. The sequence is that of Histidine ammonia-lyase from Bartonella henselae (strain ATCC 49882 / DSM 28221 / CCUG 30454 / Houston 1) (Rochalimaea henselae).